A 931-amino-acid polypeptide reads, in one-letter code: Phosphoenolpyruvate carboxylase (931 aa).

Residues H138 and K594 contribute to the active site.

It belongs to the PEPCase type 1 family. Mg(2+) serves as cofactor.

It carries out the reaction oxaloacetate + phosphate = phosphoenolpyruvate + hydrogencarbonate. Functionally, forms oxaloacetate, a four-carbon dicarboxylic acid source for the tricarboxylic acid cycle. The sequence is that of Phosphoenolpyruvate carboxylase from Streptococcus agalactiae serotype Ia (strain ATCC 27591 / A909 / CDC SS700).